The following is a 531-amino-acid chain: Anthranilate synthase component 1 (531 aa).

L-tryptophan contacts are provided by residues Ser56 and 284–286; that span reads PYM. 324–325 lines the chorismate pocket; that stretch reads GS. Glu351 is a Mg(2+) binding site. Chorismate-binding positions include Tyr439, Arg459, 473–475, and Gly475; that span reads GGG. Glu488 lines the Mg(2+) pocket. The tract at residues 506–531 is disordered; that stretch reads LHNITPDSVSAPDSVSSPDSVTEANS. Over residues 511–531 the composition is skewed to low complexity; it reads PDSVSAPDSVSSPDSVTEANS.

This sequence belongs to the anthranilate synthase component I family. In terms of assembly, heterotetramer consisting of two non-identical subunits: a beta subunit (TrpG) and a large alpha subunit (TrpE). The cofactor is Mg(2+).

The enzyme catalyses chorismate + L-glutamine = anthranilate + pyruvate + L-glutamate + H(+). The protein operates within amino-acid biosynthesis; L-tryptophan biosynthesis; L-tryptophan from chorismate: step 1/5. With respect to regulation, feedback inhibited by tryptophan. Part of a heterotetrameric complex that catalyzes the two-step biosynthesis of anthranilate, an intermediate in the biosynthesis of L-tryptophan. In the first step, the glutamine-binding beta subunit (TrpG) of anthranilate synthase (AS) provides the glutamine amidotransferase activity which generates ammonia as a substrate that, along with chorismate, is used in the second step, catalyzed by the large alpha subunit of AS (TrpE) to produce anthranilate. In the absence of TrpG, TrpE can synthesize anthranilate directly from chorismate and high concentrations of ammonia. This is Anthranilate synthase component 1 (trpE) from Arthrobacter globiformis.